Here is a 204-residue protein sequence, read N- to C-terminus: Ribonuclease HII (204 aa).

One can recognise an RNase H type-2 domain in the interval 1–197; the sequence is MTLGIDEAGR…KNRILNPKLL (197 aa). The a divalent metal cation site is built by aspartate 6, glutamate 7, and aspartate 103.

The protein belongs to the RNase HII family. Mn(2+) is required as a cofactor. Requires Mg(2+) as cofactor.

The protein resides in the cytoplasm. The enzyme catalyses Endonucleolytic cleavage to 5'-phosphomonoester.. In terms of biological role, endonuclease that specifically degrades the RNA of RNA-DNA hybrids. The sequence is that of Ribonuclease HII from Helicobacter pylori (strain HPAG1).